Reading from the N-terminus, the 700-residue chain is ATP-dependent DNA helicase UvrD2 (700 aa).

A UvrD-like helicase ATP-binding domain is found at 10-301 (AGLDDQQREA…VRLERDYRST (292 aa)). Residues 34-39 (GTGKTR) and R299 contribute to the ATP site. Positions 302–553 (PQVVSLANRV…LYVGITRARV (252 aa)) constitute a UvrD-like helicase C-terminal domain. Positions 565–595 (PGGRQSRKPSRFLNGIAPQTRADPVPGTSRR) are disordered. Residues 626–700 (ADVDEELLLQ…DVLQLVRGRT (75 aa)) enclose the HRDC domain.

Belongs to the helicase family. UvrD subfamily. It depends on Mg(2+) as a cofactor.

The enzyme catalyses Couples ATP hydrolysis with the unwinding of duplex DNA by translocating in the 3'-5' direction.. The catalysed reaction is ATP + H2O = ADP + phosphate + H(+). Functionally, DNA-dependent ATPase, stimulated equally by ss- and dsDNA. Has both ATPase and helicase activities. The chain is ATP-dependent DNA helicase UvrD2 (uvrD2) from Mycobacterium bovis (strain ATCC BAA-935 / AF2122/97).